Consider the following 307-residue polypeptide: Transcription initiation factor IIB 2 (307 aa).

The TFIIB-type zinc-finger motif lies at 7-38; it reads TPKRCPECNSEHLIRDYEHGELICADCGAVIE. Residues Cys-11, Cys-14, Cys-30, and Cys-33 each contribute to the Zn(2+) site. 2 consecutive repeat copies span residues 124-207 and 218-299.

It belongs to the TFIIB family.

Stabilizes TBP binding to an archaeal box-A promoter. Also responsible for recruiting RNA polymerase II to the pre-initiation complex (DNA-TBP-TFIIB). This chain is Transcription initiation factor IIB 2, found in Thermoplasma acidophilum (strain ATCC 25905 / DSM 1728 / JCM 9062 / NBRC 15155 / AMRC-C165).